A 418-amino-acid polypeptide reads, in one-letter code: Gamma-glutamyl phosphate reductase (418 aa).

The protein belongs to the gamma-glutamyl phosphate reductase family.

The protein localises to the cytoplasm. The enzyme catalyses L-glutamate 5-semialdehyde + phosphate + NADP(+) = L-glutamyl 5-phosphate + NADPH + H(+). Its pathway is amino-acid biosynthesis; L-proline biosynthesis; L-glutamate 5-semialdehyde from L-glutamate: step 2/2. In terms of biological role, catalyzes the NADPH-dependent reduction of L-glutamate 5-phosphate into L-glutamate 5-semialdehyde and phosphate. The product spontaneously undergoes cyclization to form 1-pyrroline-5-carboxylate. The polypeptide is Gamma-glutamyl phosphate reductase (Chlorobium limicola (strain DSM 245 / NBRC 103803 / 6330)).